The following is a 588-amino-acid chain: Zinc finger protein 599 (588 aa).

The 72-residue stretch at 9 to 80 (VSFEDVVVTF…KRGLSQSTCA (72 aa)) folds into the KRAB domain. C2H2-type zinc fingers lie at residues 199–221 (YTCTECGKGFSKKWALVRHQQIH), 227–249 (YECNECGKACRYMADVIRHMRLH), 255–277 (YKCIECGKAFKRRFHLTEHQRIH), 283–305 (YECKECGKAFTHRSSFIQHNMTH), 311–333 (FLCKECGKAFYYSSSFAQHMRIH), 339–361 (YECGECGKAFTHRSTFIQHNVTH), 367–389 (FLCKECGKTFCLNSSFTQHMRIH), 395–417 (YECGECGKAFTHRSTFIRHKRTH), 423–445 (FECKECGKAFCDSSSLIQHMRIH), 451–473 (YECSECGKAFTHHSVFIRHNRTH), 479–501 (LECKECAKAFYYSSSFTRHMRIH), 507–529 (YVCRECGKAFTQPANFVRHNRIH), 535–557 (FECKECEKAFCDNFALTQHMRTH), and 563–585 (FECNECGKTFSHSSSFTHHRKIH).

Belongs to the krueppel C2H2-type zinc-finger protein family.

Its subcellular location is the nucleus. May be involved in transcriptional regulation. The polypeptide is Zinc finger protein 599 (ZNF599) (Homo sapiens (Human)).